Here is a 1090-residue protein sequence, read N- to C-terminus: Leucine-rich repeat receptor-like serine/threonine-protein kinase RGI4 (1090 aa).

The first 20 residues, 1–20, serve as a signal peptide directing secretion; the sequence is MPRNPRFCFFLFLLFHSSLF. The Extracellular portion of the chain corresponds to 21–702; the sequence is FSIPCFSIDE…IQTRHRSAVK (682 aa). One copy of the LRR 1 repeat lies at 36 to 59; that stretch reads LSWKSQLNISGDALSSWKASESNP. Residue Asn-43 is glycosylated (N-linked (GlcNAc...) asparagine). A disulfide bond links Cys-60 and Cys-67. LRR repeat units lie at residues 95-119, 120-143, 145-166, and 168-191; these read IKSL…LGDL, SELE…IFKL, KLKI…ELGN, and VNLI…IGEL. Asn-107 carries N-linked (GlcNAc...) asparagine glycosylation. 4 consecutive short sequence motifs (small peptide recognition) follow at residues 176–177, 198–201, 221–226, and Tyr-249; these read FD, RAGG, and TLGLAE. LRR repeat units follow at residues 216–240, 242–264, 265–288, 289–312, 314–335, 336–360, and 362–386; these read CESL…IGNL, KVQT…IGNC, TELQ…MGRL, KKLQ…LGTC, ELFL…SFGN, LPNL…LANC, and KLTH…KLTS. Asn-263 carries an N-linked (GlcNAc...) asparagine glycan. The CLE45 peptide binding signature appears at 269 to 273; the sequence is NLYLY. The Small peptide recognition signature appears at 271-273; it reads YLY. 2 consecutive short sequence motifs (small peptide recognition) follow at residues 319-322 and 341-343; these read DLSE and ELQ. Asn-359 is a glycosylation site (N-linked (GlcNAc...) asparagine). 2 consecutive short sequence motifs (small peptide recognition) follow at residues 389-393 and 415-418; these read MFFAW and DLSY. LRR repeat units lie at residues 408–432, 434–456, 457–480, 481–504, 506–526, 527–550, 551–574, 576–598, 600–622, 623–646, and 647–670; these read CQEL…IFEI, NLTK…IGNC, TNLY…IGNL, KNLN…ISGC, SLEF…GTLP, KSLQ…IGSL, TELT…ISSC, SLQL…LGRI, SLAI…RFSS, LTNL…LADL, and QNLV…LFFR. N-linked (GlcNAc...) asparagine glycosylation is found at Asn-420 and Asn-434. Residues 437–441 carry the Small peptide recognition motif; sequence KLLLL. Asn-455 carries an N-linked (GlcNAc...) asparagine glycan. Positions 461 to 463 match the Small peptide recognition motif; sequence RLR. An N-linked (GlcNAc...) asparagine glycan is attached at Asn-606. Asn-653 is a glycosylation site (N-linked (GlcNAc...) asparagine). Residues 703–723 traverse the membrane as a helical segment; sequence VTMSILVAASVVLVLMAVYTL. At 724–1090 the chain is on the cytoplasmic side; it reads VKAQRITGKQ…CSFAYSDESV (367 aa). Residues 758-1040 form the Protein kinase domain; the sequence is LTSANVIGTG…KDIVAMLKEI (283 aa). Residues 764–772 and Lys-786 each bind ATP; that span reads IGTGSSGVV. Phosphotyrosine occurs at positions 829 and 869. Asp-882 (proton acceptor) is an active-site residue. Tyr-932 is modified (phosphotyrosine). Residues 1037–1060 form an LRR 24 repeat; sequence LKEIRQFDMDRSESDMIKGGKCEK. Residues 1054–1079 form a disordered region; that stretch reads KGGKCEKWQPQPLPPEKIVSTPRGSS.

The protein belongs to the protein kinase superfamily. Ser/Thr protein kinase family. As to quaternary structure, self-interacts. Interacts with RGF1; this interaction triggers its phosphorylation and ubiquitination and the formation of heterodimers with SERK1. In terms of processing, autophosphorylated. Post-translationally, phosphorylated and ubiquitinated upon interaction with RGF1, thus leading to activation a subsequent degradation. As to expression, expressed in floers, pollen grains and stipules. Present in roots.

Its subcellular location is the cell membrane. It carries out the reaction L-seryl-[protein] + ATP = O-phospho-L-seryl-[protein] + ADP + H(+). The enzyme catalyses L-threonyl-[protein] + ATP = O-phospho-L-threonyl-[protein] + ADP + H(+). Functionally, receptor with a serine/threonine-protein kinase activity. Together with SKM1, LRR-rich receptor-like kinase (LRR-RLK) required for male fertility by the perception of CLE43 and CLE45 peptides and the transduction of their promoting action in pollen tubes, especially under relatively high temperature (at 30 degrees Celsius), thus conferring tolerance against high temperature probably through the maintenance of mitochondrial activity. Seems to not be involved in the perception of CLE45 peptide in roots. Together with RGI1, RGI2, RGI3, RGI4 and RGI5, acts as receptor of RGF1, a peptide hormone that maintains the postembryonic root stem cell niche by regulating the expression levels and patterns of the transcription factor PLETHORA (PLT). Links RGF1 signal with its downstream components. The protein is Leucine-rich repeat receptor-like serine/threonine-protein kinase RGI4 of Arabidopsis thaliana (Mouse-ear cress).